The chain runs to 482 residues: Bactericidal permeability-increasing protein (482 aa).

A signal peptide spans 1-26 (MARGPDTARRWATLVVLAALSTAVTT). The tract at residues 27-36 (TNPGIVARIT) is central sheet, part 1. The interval 36–219 (TQKGLDYACQ…SKLQPYFQTL (184 aa)) is N-terminal barrel. N-linked (GlcNAc...) asparagine glycosylation is present at N62. An intrachain disulfide couples C161 to C201. The interval 221-285 (VTTKLDKVAG…HDRMVYLGIS (65 aa)) is central sheet, part 2. The interval 235-240 (LVAPPR) is cleavage sites for elastase. The tract at residues 286–456 (EYFFNTAGFV…LQKGFPLPLP (171 aa)) is C-terminal barrel. N-linked (GlcNAc...) asparagine glycosylation is found at N303, N375, N389, and N463. Residues 463–482 (NLTLQPYQDFLLFGADVHYS) form a central sheet, part 3 region.

It belongs to the BPI/LBP/Plunc superfamily. BPI/LBP family. As to quaternary structure, monomer. Homodimer; disulfide-linked. Restricted to cells of the myeloid series.

The protein localises to the secreted. Its subcellular location is the cytoplasmic granule membrane. Functionally, the cytotoxic action of BPI is limited to many species of Gram-negative bacteria; this specificity may be explained by a strong affinity of the very basic N-terminal half for the negatively charged lipopolysaccharides that are unique to the Gram-negative bacterial outer envelope. The polypeptide is Bactericidal permeability-increasing protein (BPI) (Bos taurus (Bovine)).